A 277-amino-acid chain; its full sequence is Release factor glutamine methyltransferase (277 aa).

Residues 119 to 123 (GTGTG), aspartate 142, and asparagine 184 each bind S-adenosyl-L-methionine. Substrate is bound at residue 184–187 (NPPY).

This sequence belongs to the protein N5-glutamine methyltransferase family. PrmC subfamily.

It catalyses the reaction L-glutaminyl-[peptide chain release factor] + S-adenosyl-L-methionine = N(5)-methyl-L-glutaminyl-[peptide chain release factor] + S-adenosyl-L-homocysteine + H(+). In terms of biological role, methylates the class 1 translation termination release factors RF1/PrfA and RF2/PrfB on the glutamine residue of the universally conserved GGQ motif. The protein is Release factor glutamine methyltransferase of Enterococcus faecalis (strain ATCC 700802 / V583).